A 169-amino-acid chain; its full sequence is Photosystem I assembly protein Ycf3 (169 aa).

TPR repeat units lie at residues 35 to 68 (AFSY…EIDP), 72 to 105 (SYIL…NPAL), and 120 to 153 (GEQA…APSN).

This sequence belongs to the Ycf3 family.

The protein resides in the plastid. The protein localises to the chloroplast thylakoid membrane. Its function is as follows. Essential for the assembly of the photosystem I (PSI) complex. May act as a chaperone-like factor to guide the assembly of the PSI subunits. This chain is Photosystem I assembly protein Ycf3, found in Chaetosphaeridium globosum (Charophycean green alga).